The following is a 169-amino-acid chain: Ubiquitin-fold modifier-conjugating enzyme 1 (169 aa).

The active-site Glycyl thioester intermediate is the Cys116.

Belongs to the ubiquitin-conjugating enzyme family. UFC1 subfamily.

Functionally, E2-like enzyme which forms an intermediate with UFM1 via a thioester linkage. The sequence is that of Ubiquitin-fold modifier-conjugating enzyme 1 from Branchiostoma floridae (Florida lancelet).